We begin with the raw amino-acid sequence, 755 residues long: Tryptophan 2-monooxygenase (755 aa).

The FMN site is built by Ser-247, Glu-267, Lys-275, and Arg-295. Residue Arg-295 coordinates substrate.

The protein belongs to the tryptophan 2-monooxygenase family. Requires FMN as cofactor.

It carries out the reaction L-tryptophan + O2 = indole-3-acetamide + CO2 + H2O. The protein operates within plant hormone metabolism; auxin biosynthesis. In Agrobacterium vitis (Rhizobium vitis), this protein is Tryptophan 2-monooxygenase (iaaM).